Here is a 665-residue protein sequence, read N- to C-terminus: Long chain acyl-CoA synthetase 3 (665 aa).

Position 228 to 239 (228 to 239 (IMYTSGTTGDPK)) interacts with ATP. The tract at residues 495–519 (DGWLHTGDVGEWQPDGAMKIIDRKK) is fatty acid-binding.

It belongs to the ATP-dependent AMP-binding enzyme family. It depends on Mg(2+) as a cofactor.

It catalyses the reaction a long-chain fatty acid + ATP + CoA = a long-chain fatty acyl-CoA + AMP + diphosphate. The protein operates within lipid metabolism; fatty acid metabolism. Activation of long-chain fatty acids for both synthesis of cellular lipids, and degradation via beta-oxidation. Preferentially uses palmitate, palmitoleate, oleate and linoleate. This chain is Long chain acyl-CoA synthetase 3 (LACS3), found in Arabidopsis thaliana (Mouse-ear cress).